The primary structure comprises 229 residues: Putative N-acetylmannosamine-6-phosphate 2-epimerase (229 aa).

This sequence belongs to the NanE family.

It catalyses the reaction an N-acyl-D-glucosamine 6-phosphate = an N-acyl-D-mannosamine 6-phosphate. It functions in the pathway amino-sugar metabolism; N-acetylneuraminate degradation; D-fructose 6-phosphate from N-acetylneuraminate: step 3/5. Its function is as follows. Converts N-acetylmannosamine-6-phosphate (ManNAc-6-P) to N-acetylglucosamine-6-phosphate (GlcNAc-6-P). The chain is Putative N-acetylmannosamine-6-phosphate 2-epimerase from Actinobacillus pleuropneumoniae serotype 3 (strain JL03).